The following is a 709-amino-acid chain: Homeobox-leucine zipper protein TF1 (709 aa).

Positions 66-125 form a DNA-binding region, homeobox; the sequence is RKRRLQRLTGKQSEVLEGFFSICGHPDDGQKRHLSETTGLGLDQVKFWFQNKRTQVKTMC. Residues 166–187 are a coiled coil; it reads NQLAVEMERLMGQSEWLQQEIA. Residues 212–441 enclose the START domain; it reads GQHDQQMIAE…MARQSARMRD (230 aa).

This sequence belongs to the HD-ZIP homeobox family. Class IV subfamily.

The protein resides in the nucleus. In terms of biological role, probable transcription factor. The chain is Homeobox-leucine zipper protein TF1 (TF1) from Oryza sativa subsp. japonica (Rice).